A 307-amino-acid chain; its full sequence is Aspartate carbamoyltransferase catalytic subunit (307 aa).

2 residues coordinate carbamoyl phosphate: R54 and T55. K83 contributes to the L-aspartate binding site. R104, H132, and Q135 together coordinate carbamoyl phosphate. 2 residues coordinate L-aspartate: R165 and R228. The carbamoyl phosphate site is built by L267 and P268.

It belongs to the aspartate/ornithine carbamoyltransferase superfamily. ATCase family. As to quaternary structure, heterododecamer (2C3:3R2) of six catalytic PyrB chains organized as two trimers (C3), and six regulatory PyrI chains organized as three dimers (R2).

The enzyme catalyses carbamoyl phosphate + L-aspartate = N-carbamoyl-L-aspartate + phosphate + H(+). The protein operates within pyrimidine metabolism; UMP biosynthesis via de novo pathway; (S)-dihydroorotate from bicarbonate: step 2/3. Its function is as follows. Catalyzes the condensation of carbamoyl phosphate and aspartate to form carbamoyl aspartate and inorganic phosphate, the committed step in the de novo pyrimidine nucleotide biosynthesis pathway. The chain is Aspartate carbamoyltransferase catalytic subunit from Clostridium acetobutylicum (strain ATCC 824 / DSM 792 / JCM 1419 / IAM 19013 / LMG 5710 / NBRC 13948 / NRRL B-527 / VKM B-1787 / 2291 / W).